We begin with the raw amino-acid sequence, 65 residues long: Large ribosomal subunit protein uL29 (65 aa).

It belongs to the universal ribosomal protein uL29 family.

This Thioalkalivibrio sulfidiphilus (strain HL-EbGR7) protein is Large ribosomal subunit protein uL29.